The following is a 507-amino-acid chain: Dihydrolipoyllysine-residue acetyltransferase component of pyruvate dehydrogenase complex, mitochondrial (507 aa).

Positions 77-153 constitute a Lipoyl-binding domain; that stretch reads HNRVALPALS…PIGKLLCIIV (77 aa). At Lys-118 the chain carries N6-lipoyllysine. Disordered stretches follow at residues 168 to 223 and 248 to 270; these read DGAS…VSAS and RILASDLSQAPAKGATSTTTQAV. The region spanning 221–258 is the Peripheral subunit-binding (PSBD) domain; that stretch reads SASPFAKKLAAENGLDLSGVSGSGPGGRILASDLSQAP. Catalysis depends on residues His-480 and Asp-484.

This sequence belongs to the 2-oxoacid dehydrogenase family. It depends on (R)-lipoate as a cofactor.

It is found in the mitochondrion matrix. It carries out the reaction N(6)-[(R)-dihydrolipoyl]-L-lysyl-[protein] + acetyl-CoA = N(6)-[(R)-S(8)-acetyldihydrolipoyl]-L-lysyl-[protein] + CoA. Its function is as follows. The pyruvate dehydrogenase complex catalyzes the overall conversion of pyruvate to acetyl-CoA and CO(2). It contains multiple copies of three enzymatic components: pyruvate dehydrogenase (E1), dihydrolipoamide acetyltransferase (E2) and lipoamide dehydrogenase (E3). In Caenorhabditis elegans, this protein is Dihydrolipoyllysine-residue acetyltransferase component of pyruvate dehydrogenase complex, mitochondrial.